The chain runs to 174 residues: Co-chaperone protein HscB homolog (174 aa).

One can recognise a J domain in the interval 2 to 74 (NYFELFKFSP…IRRAEHMLSL (73 aa)).

The protein belongs to the HscB family. In terms of assembly, interacts with HscA and stimulates its ATPase activity.

Its function is as follows. Co-chaperone involved in the maturation of iron-sulfur cluster-containing proteins. Seems to help targeting proteins to be folded toward HscA. The chain is Co-chaperone protein HscB homolog from Shewanella sp. (strain MR-4).